A 450-amino-acid chain; its full sequence is Solute carrier family 52, riboflavin transporter, member 2 (450 aa).

Transmembrane regions (helical) follow at residues 14-34 (LLVA…WVEL), 47-67 (LPSY…LVTL), 79-99 (IPIQ…APLW), 114-136 (FLTL…LPFL), and 147-167 (FFLG…AQGV). Asn178 is a glycosylation site (N-linked (GlcNAc...) asparagine). The chain crosses the membrane as a helical span at residues 201-221 (FFWVLTALLGTSAAAFQGLLL). Residues 230-268 (ATMGTGLRVETPGTEEEEEEEEASPLQEPPGQVASIVSS) are disordered. Positions 242-252 (GTEEEEEEEEA) are enriched in acidic residues. Helical transmembrane passes span 282–302 (ACLL…LPAV), 317–337 (LAVV…MAVL), 344–364 (LYGL…LAVL), 371–391 (VGTS…AGVF), and 409–429 (ALLA…IAMF).

Belongs to the riboflavin transporter family. As to expression, highly expressed in the placenta and small intestine, moderately in the kidney, colon, lung, prostate, uterus, and thymus, and weakly in all other tissues.

It localises to the cell membrane. The catalysed reaction is riboflavin(in) = riboflavin(out). With respect to regulation, riboflavin transport is Na(+)-independent but moderately pH-sensitive. Activity is strongly inhibited by riboflavin analogs, such as lumiflavin. Weakly inhibited by flavin adenine dinucleotide (FAD) and flavin mononucleotide (FMN). Plasma membrane transporter mediating the uptake by cells of the water soluble vitamin B2/riboflavin that plays a key role in biochemical oxidation-reduction reactions of the carbohydrate, lipid, and amino acid metabolism. May also act as a receptor for 4-hydroxybutyrate. The chain is Solute carrier family 52, riboflavin transporter, member 2 (Slc52a2) from Rattus norvegicus (Rat).